A 472-amino-acid chain; its full sequence is Methanethiol oxidase (472 aa).

Residue alanine 2 is modified to N-acetylalanine. At serine 467 the chain carries Phosphoserine.

This sequence belongs to the selenium-binding protein family. As to quaternary structure, interacts with USP33. Post-translationally, the N-terminus is blocked.

It localises to the nucleus. The protein resides in the cytoplasm. The protein localises to the cytosol. Its subcellular location is the membrane. It catalyses the reaction methanethiol + O2 + H2O = hydrogen sulfide + formaldehyde + H2O2 + H(+). The protein operates within organosulfur degradation. Catalyzes the oxidation of methanethiol, an organosulfur compound known to be produced in substantial amounts by gut bacteria. Selenium-binding protein which may be involved in the sensing of reactive xenobiotics in the cytoplasm. May be involved in intra-Golgi protein transport. The sequence is that of Methanethiol oxidase (SELENBP1) from Bos taurus (Bovine).